The following is a 249-amino-acid chain: DNA polymerase sliding clamp (249 aa).

This sequence belongs to the PCNA family. As to quaternary structure, homotrimer. The subunits circularize to form a toroid; DNA passes through its center. Replication factor C (RFC) is required to load the toroid on the DNA.

Its function is as follows. Sliding clamp subunit that acts as a moving platform for DNA processing. Responsible for tethering the catalytic subunit of DNA polymerase and other proteins to DNA during high-speed replication. The chain is DNA polymerase sliding clamp from Nanoarchaeum equitans (strain Kin4-M).